The sequence spans 127 residues: Histone H2A (127 aa).

Residues 1–20 (MSGRGKGGKAKTGGKAKSRS) are compositionally biased toward basic residues. Positions 1 to 23 (MSGRGKGGKAKTGGKAKSRSSRA) are disordered. S2 is subject to N-acetylserine. The residue at position 2 (S2) is a Phosphoserine. K6, K9, and K11 each carry N6-acetyllysine; partial. Q106 bears the N5-methylglutamine mark. K121 participates in a covalent cross-link: Glycyl lysine isopeptide (Lys-Gly) (interchain with G-Cter in ubiquitin).

This sequence belongs to the histone H2A family. The nucleosome is a histone octamer containing two molecules each of H2A, H2B, H3 and H4 assembled in one H3-H4 heterotetramer and two H2A-H2B heterodimers. The octamer wraps approximately 147 bp of DNA. Monoubiquitination of Lys-121 gives a specific tag for epigenetic transcriptional repression. Post-translationally, phosphorylation on Ser-2 is enhanced during mitosis. Phosphorylation on Ser-2 directly represses transcription.

The protein resides in the nucleus. It is found in the chromosome. In terms of biological role, core component of nucleosome. Nucleosomes wrap and compact DNA into chromatin, limiting DNA accessibility to the cellular machineries which require DNA as a template. Histones thereby play a central role in transcription regulation, DNA repair, DNA replication and chromosomal stability. DNA accessibility is regulated via a complex set of post-translational modifications of histones, also called histone code, and nucleosome remodeling. This is Histone H2A (his-3) from Caenorhabditis elegans.